The sequence spans 247 residues: Probable transcriptional regulatory protein Asuc_1803 (247 aa).

The protein belongs to the TACO1 family.

It is found in the cytoplasm. The sequence is that of Probable transcriptional regulatory protein Asuc_1803 from Actinobacillus succinogenes (strain ATCC 55618 / DSM 22257 / CCUG 43843 / 130Z).